The primary structure comprises 146 residues: 3-dehydroquinate dehydratase (146 aa).

Catalysis depends on tyrosine 23, which acts as the Proton acceptor. Substrate is bound by residues asparagine 74, histidine 80, and aspartate 87. Histidine 100 functions as the Proton donor in the catalytic mechanism. Residues 101 to 102 (IS) and arginine 111 contribute to the substrate site.

It belongs to the type-II 3-dehydroquinase family. In terms of assembly, homododecamer.

The enzyme catalyses 3-dehydroquinate = 3-dehydroshikimate + H2O. Its pathway is metabolic intermediate biosynthesis; chorismate biosynthesis; chorismate from D-erythrose 4-phosphate and phosphoenolpyruvate: step 3/7. Catalyzes a trans-dehydration via an enolate intermediate. The protein is 3-dehydroquinate dehydratase of Bacillus cytotoxicus (strain DSM 22905 / CIP 110041 / 391-98 / NVH 391-98).